Reading from the N-terminus, the 478-residue chain is MLNALTRDRLVSEMKQGWKLAAAIGLMAVSFGAAHAQDADEALIKRGEYVARLSDCIACHTALHGQPYAGGLEIKSPIGTIYSTNITPDPEHGIGNYTLEDFTKALRKGIRKDGATVYPAMPYPEFARLSDDDIRAMYAFFMHGVKPVALQNKAPDISWPLSMRWPLGMWRAMFVPSMTPGVDKSISDPEVARGEYLVNGPGHCGECHTPRGFGMQVKAYGTAGGNAYLAGGAPIDNWIAPSLRSNSDTGLGRWSEDDIVTFLKSGRIDHSAVFGGMADVVAYSTQHWSDDDLRATAKYLKSMPAVPEGKNLGQDDGQTTALLNKGGQGNAGAEVYLHNCAICHMNDGTGVNRMFPPLAGNPVVITDDPTSLANVVAFGGILPPTNSAPSAVAMPGFKNHLSDQEMADVVNFMRKGWGNNAPGTVSASDIQKLRTTGAPVSTAGWNVSSKGWMAYMPQPYGEDWTFSPQTHTGVDDAQ.

Positions 1 to 36 (MLNALTRDRLVSEMKQGWKLAAAIGLMAVSFGAAHA) are cleaved as a signal peptide. Glutamine 37 carries the pyrrolidone carboxylic acid modification. 3 consecutive Cytochrome c domains span residues 42-145 (ALIK…MHGV), 189-304 (PEVA…KSMP), and 327-417 (GQGN…RKGW). Heme c is bound by residues cysteine 56, cysteine 59, histidine 60, cysteine 204, cysteine 207, histidine 208, cysteine 340, cysteine 343, and histidine 344.

The alcohol dehydrogenase multicomponent enzyme system is composed of a dehydrogenase subunit I (AdhA), a cytochrome c subunit II (AdhB) and a subunit III (AdhS). The cofactor is heme c.

It is found in the cell membrane. The enzyme catalyses ethanol + a ubiquinone = a ubiquinol + acetaldehyde. 2,6-dichloro-4-dicyanovinylphenol (PC16) and antimycin A inhibit ubiquinol oxidation activity more selectively than the ubiquinone reductase activity. Its function is as follows. Cytochrome c component of the alcohol dehydrogenase multicomponent enzyme system which is involved in the production of acetic acid and in the ethanol oxidase respiratory chain. Quinohemoprotein alcohol dehydrogenase (ADH) catalyzes the oxidation of ethanol to acetaldehyde by transferring electrons to the ubiquinone embedded in the membrane phospholipids. The electrons transfer from ethanol to membranous ubiquinone occurs from pyrroloquinoline quinone (PQQ) to one heme c in subunit I (AdhA), and finally to two heme c in subunit II (AdhB). Besides ubiquinone reduction, ADH also has a ubiquinol (QH2) oxidation reaction which mediates electron transfer from ubiquinol to the non-energy generating bypass oxidase system. The electrons transfer occurs from ubiquinol (QH2) to the additional heme c within subunit II (AdhB). Also able to use quinone analogs such as 2,3-dimethoxy-5-methyl-6-n-decyl-1,4-benzoquinone (DB) and 2,3-dimethoxy-5-methyl-6-n-pentyl-1,4-benzoquinone (PB). The sequence is that of Alcohol dehydrogenase (quinone), cytochrome c subunit from Gluconobacter oxydans (strain 621H) (Gluconobacter suboxydans).